Consider the following 76-residue polypeptide: MSRRPKIEEAMKRVESRYELVHAAVRRTLQLLREGEDFFVQEGGEVHKKTFAAIEDIAEGKVKIIKKKEESGSKEE.

Belongs to the RNA polymerase subunit omega family. In terms of assembly, the RNAP catalytic core consists of 2 alpha, 1 beta, 1 beta' and 1 omega subunit. When a sigma factor is associated with the core the holoenzyme is formed, which can initiate transcription.

The catalysed reaction is RNA(n) + a ribonucleoside 5'-triphosphate = RNA(n+1) + diphosphate. Promotes RNA polymerase assembly. Latches the N- and C-terminal regions of the beta' subunit thereby facilitating its interaction with the beta and alpha subunits. The chain is DNA-directed RNA polymerase subunit omega (rpoZ) from Aquifex aeolicus (strain VF5).